Reading from the N-terminus, the 281-residue chain is Protein DOG1-like 1 (281 aa).

Residues 9 to 265 (EKLQQDCYNE…HEWGKSREHR (257 aa)) form the DOG1 domain. A disordered region spans residues 262-281 (REHRRLEASGGDSGGNVTRE).

This is Protein DOG1-like 1 from Arabidopsis thaliana (Mouse-ear cress).